We begin with the raw amino-acid sequence, 325 residues long: MEEWTLLFVLILSFAAAVIMSPLFIPFLRKLKFGQSIREEGPKSHQKKSGTPTMGGIVIVLSIFISALAIGIAITGFTPELLLLMVVTLGYGIVGFVDDYLKVVRKHNLGLTSKQKLAGQLVIAAIFYIGLLAIGFDTFIAIPGTTFGFDLGWLYLILIVLMLLGASNAVNLTDGLDGLLAGTGSIAFGAFAILAWSGGFIDTALFSTAITGALLGFLVFNAHPAKVFMGDTGSLALGGAIAAIAILTKMELMLIIVGGVFVIETLSVIIQVASFKLTGKRVFRMSPLHHHYELVGWSEWRVVVTFWLVGMIFAIMGVYIGVWLT.

The next 9 membrane-spanning stretches (helical) occupy residues 7–27, 57–77, 81–101, 122–142, 146–166, 186–206, 227–247, 252–272, and 302–322; these read LFVL…FIPF, IVIV…ITGF, LLLL…DDYL, VIAA…FIAI, TFGF…LLGA, IAFG…TALF, VFMG…IAIL, LMLI…IIQV, and VVVT…YIGV.

It belongs to the glycosyltransferase 4 family. MraY subfamily. Requires Mg(2+) as cofactor.

It is found in the cell membrane. It carries out the reaction UDP-N-acetyl-alpha-D-muramoyl-L-alanyl-gamma-D-glutamyl-meso-2,6-diaminopimeloyl-D-alanyl-D-alanine + di-trans,octa-cis-undecaprenyl phosphate = di-trans,octa-cis-undecaprenyl diphospho-N-acetyl-alpha-D-muramoyl-L-alanyl-D-glutamyl-meso-2,6-diaminopimeloyl-D-alanyl-D-alanine + UMP. Its pathway is cell wall biogenesis; peptidoglycan biosynthesis. Its function is as follows. Catalyzes the initial step of the lipid cycle reactions in the biosynthesis of the cell wall peptidoglycan: transfers peptidoglycan precursor phospho-MurNAc-pentapeptide from UDP-MurNAc-pentapeptide onto the lipid carrier undecaprenyl phosphate, yielding undecaprenyl-pyrophosphoryl-MurNAc-pentapeptide, known as lipid I. The polypeptide is Phospho-N-acetylmuramoyl-pentapeptide-transferase (Shouchella clausii (strain KSM-K16) (Alkalihalobacillus clausii)).